A 188-amino-acid chain; its full sequence is Elongation factor P (188 aa).

Belongs to the elongation factor P family.

It is found in the cytoplasm. It participates in protein biosynthesis; polypeptide chain elongation. In terms of biological role, involved in peptide bond synthesis. Stimulates efficient translation and peptide-bond synthesis on native or reconstituted 70S ribosomes in vitro. Probably functions indirectly by altering the affinity of the ribosome for aminoacyl-tRNA, thus increasing their reactivity as acceptors for peptidyl transferase. In Anaplasma marginale (strain St. Maries), this protein is Elongation factor P.